A 101-amino-acid polypeptide reads, in one-letter code: Integration host factor subunit alpha (101 aa).

Belongs to the bacterial histone-like protein family. In terms of assembly, heterodimer of an alpha and a beta chain.

Functionally, this protein is one of the two subunits of integration host factor, a specific DNA-binding protein that functions in genetic recombination as well as in transcriptional and translational control. This Halorhodospira halophila (strain DSM 244 / SL1) (Ectothiorhodospira halophila (strain DSM 244 / SL1)) protein is Integration host factor subunit alpha.